The following is a 343-amino-acid chain: Multidrug resistance protein MdtN (343 aa).

The Cytoplasmic portion of the chain corresponds to 1-12; the sequence is MESTPKKAPRSK. The helical; Signal-anchor for type II membrane protein transmembrane segment at 13–33 threads the bilayer; it reads FPALLVVALALVALVFVIWRV. Residues 34–343 are Periplasmic-facing; it reads DSAPSTNDAY…ASAVANLEPQ (310 aa).

Belongs to the membrane fusion protein (MFP) (TC 8.A.1) family. In terms of assembly, could be part of a tripartite efflux system composed of MdtN, MdtO and MdtP.

The protein localises to the cell inner membrane. Its function is as follows. Could be involved in resistance to puromycin, acriflavine and tetraphenylarsonium chloride. In Escherichia coli (strain K12), this protein is Multidrug resistance protein MdtN (mdtN).